Consider the following 496-residue polypeptide: Cytochrome P450 71D181 (496 aa).

A helical; Signal-anchor for type II membrane protein transmembrane segment spans residues 1–21; sequence MDISISWVAIILVISSYFIFM. Cys435 lines the heme pocket. The tract at residues 471–496 is disordered; the sequence is MSETPGLSGPRKNPLIMVPTIHNPTS.

The protein belongs to the cytochrome P450 family. Requires heme as cofactor. As to expression, expressed at low levels in flowers, leaves and stems.

Its subcellular location is the membrane. It carries out the reaction alpha-terpinene + 2 reduced [NADPH--hemoprotein reductase] + 2 O2 = carvacrol + 2 oxidized [NADPH--hemoprotein reductase] + 3 H2O + 2 H(+). The catalysed reaction is gamma-terpinene + 2 reduced [NADPH--hemoprotein reductase] + 2 O2 = carvacrol + 2 oxidized [NADPH--hemoprotein reductase] + 3 H2O + 2 H(+). It catalyses the reaction (4S)-limonene + reduced [NADPH--hemoprotein reductase] + O2 = (1S,5R)-carveol + oxidized [NADPH--hemoprotein reductase] + H2O + H(+). The enzyme catalyses (4R)-limonene + reduced [NADPH--hemoprotein reductase] + O2 = (1R,5S)-carveol + oxidized [NADPH--hemoprotein reductase] + H2O + H(+). It participates in secondary metabolite biosynthesis; terpenoid biosynthesis. Functionally, involved in the biosynthesis of phenolic monoterpenes natural products thymol and carvacrol which have a broad range of biological activities acting as antimicrobial compounds, insecticides, antioxidants and pharmaceutical agents. Catalyzes the C2-hydroxylation of gamma-terpinene and alpha-terpinene to produce carvacrol. Also mediates the C6-hydroxylation of (4S)-limonene and (4R)-limonene to form carveol. In Origanum vulgare (Wild marjoram), this protein is Cytochrome P450 71D181.